Reading from the N-terminus, the 324-residue chain is Acetaldehyde dehydrogenase 1 (324 aa).

18 to 21 (SGNI) contacts NAD(+). C136 functions as the Acyl-thioester intermediate in the catalytic mechanism. Residues 167 to 175 (SAGPGTRAN) and N297 each bind NAD(+).

It belongs to the acetaldehyde dehydrogenase family.

It carries out the reaction acetaldehyde + NAD(+) + CoA = acetyl-CoA + NADH + H(+). This is Acetaldehyde dehydrogenase 1 from Parafrankia sp. (strain EAN1pec).